Reading from the N-terminus, the 408-residue chain is tRNA-specific 2-thiouridylase MnmA (408 aa).

Residues 27-34 (AMSGGVDS) and Leu53 each bind ATP. Cys121 (nucleophile) is an active-site residue. A disulfide bridge links Cys121 with Cys222. ATP is bound at residue Gly145. The interaction with tRNA stretch occupies residues 172-174 (RDQ). Residue Cys222 is the Cysteine persulfide intermediate of the active site.

Belongs to the MnmA/TRMU family.

It localises to the cytoplasm. The enzyme catalyses S-sulfanyl-L-cysteinyl-[protein] + uridine(34) in tRNA + AH2 + ATP = 2-thiouridine(34) in tRNA + L-cysteinyl-[protein] + A + AMP + diphosphate + H(+). Its function is as follows. Catalyzes the 2-thiolation of uridine at the wobble position (U34) of tRNA, leading to the formation of s(2)U34. This is tRNA-specific 2-thiouridylase MnmA from Rhizobium johnstonii (strain DSM 114642 / LMG 32736 / 3841) (Rhizobium leguminosarum bv. viciae).